The sequence spans 292 residues: ATP synthase gamma chain (292 aa).

This sequence belongs to the ATPase gamma chain family. As to quaternary structure, F-type ATPases have 2 components, CF(1) - the catalytic core - and CF(0) - the membrane proton channel. CF(1) has five subunits: alpha(3), beta(3), gamma(1), delta(1), epsilon(1). CF(0) has three main subunits: a, b and c.

Its subcellular location is the cell inner membrane. In terms of biological role, produces ATP from ADP in the presence of a proton gradient across the membrane. The gamma chain is believed to be important in regulating ATPase activity and the flow of protons through the CF(0) complex. The protein is ATP synthase gamma chain of Maridesulfovibrio salexigens (strain ATCC 14822 / DSM 2638 / NCIMB 8403 / VKM B-1763) (Desulfovibrio salexigens).